The chain runs to 128 residues: UPF0102 protein BCG_2919c (128 aa).

The protein belongs to the UPF0102 family.

In Mycobacterium bovis (strain BCG / Pasteur 1173P2), this protein is UPF0102 protein BCG_2919c.